The sequence spans 222 residues: Protein GrpE (222 aa).

Belongs to the GrpE family. In terms of assembly, homodimer.

Its subcellular location is the cytoplasm. Functionally, participates actively in the response to hyperosmotic and heat shock by preventing the aggregation of stress-denatured proteins, in association with DnaK and GrpE. It is the nucleotide exchange factor for DnaK and may function as a thermosensor. Unfolded proteins bind initially to DnaJ; upon interaction with the DnaJ-bound protein, DnaK hydrolyzes its bound ATP, resulting in the formation of a stable complex. GrpE releases ADP from DnaK; ATP binding to DnaK triggers the release of the substrate protein, thus completing the reaction cycle. Several rounds of ATP-dependent interactions between DnaJ, DnaK and GrpE are required for fully efficient folding. This is Protein GrpE from Bartonella bacilliformis (strain ATCC 35685 / KC583 / Herrer 020/F12,63).